The sequence spans 276 residues: Formamidopyrimidine-DNA glycosylase (276 aa).

The Schiff-base intermediate with DNA role is filled by proline 2. Catalysis depends on glutamate 3, which acts as the Proton donor. The active-site Proton donor; for beta-elimination activity is the lysine 60. Residues arginine 113 and arginine 152 each contribute to the DNA site. An FPG-type zinc finger spans residues 241-275; it reads NVFRKTGHPCPRCGHLIEKLIVAQRSTHICPICQK. Arginine 265 functions as the Proton donor; for delta-elimination activity in the catalytic mechanism.

It belongs to the FPG family. As to quaternary structure, monomer. Zn(2+) serves as cofactor.

The enzyme catalyses Hydrolysis of DNA containing ring-opened 7-methylguanine residues, releasing 2,6-diamino-4-hydroxy-5-(N-methyl)formamidopyrimidine.. It catalyses the reaction 2'-deoxyribonucleotide-(2'-deoxyribose 5'-phosphate)-2'-deoxyribonucleotide-DNA = a 3'-end 2'-deoxyribonucleotide-(2,3-dehydro-2,3-deoxyribose 5'-phosphate)-DNA + a 5'-end 5'-phospho-2'-deoxyribonucleoside-DNA + H(+). Its function is as follows. Involved in base excision repair of DNA damaged by oxidation or by mutagenic agents. Acts as a DNA glycosylase that recognizes and removes damaged bases. Has a preference for oxidized purines, such as 7,8-dihydro-8-oxoguanine (8-oxoG). Has AP (apurinic/apyrimidinic) lyase activity and introduces nicks in the DNA strand. Cleaves the DNA backbone by beta-delta elimination to generate a single-strand break at the site of the removed base with both 3'- and 5'-phosphates. The sequence is that of Formamidopyrimidine-DNA glycosylase from Protochlamydia amoebophila (strain UWE25).